An 852-amino-acid polypeptide reads, in one-letter code: Phenylalanine--tRNA ligase beta subunit (852 aa).

The region spanning 44 to 159 (PETTGPLVIG…DADLASANLK (116 aa)) is the tRNA-binding domain. One can recognise a B5 domain in the interval 428-510 (PEMPMITIHT…RLEGLEDIPS (83 aa)). Residues D488, D494, E497, and E498 each coordinate Mg(2+). The FDX-ACB domain maps to 758-851 (SAFPAVLQDI…ATEKVGAQLR (94 aa)).

The protein belongs to the phenylalanyl-tRNA synthetase beta subunit family. Type 1 subfamily. As to quaternary structure, tetramer of two alpha and two beta subunits. The cofactor is Mg(2+).

It localises to the cytoplasm. The catalysed reaction is tRNA(Phe) + L-phenylalanine + ATP = L-phenylalanyl-tRNA(Phe) + AMP + diphosphate + H(+). The protein is Phenylalanine--tRNA ligase beta subunit of Corynebacterium jeikeium (strain K411).